A 419-amino-acid polypeptide reads, in one-letter code: UDP-N-acetylglucosamine 1-carboxyvinyltransferase 2 (419 aa).

A phosphoenolpyruvate-binding site is contributed by 22-23 (KN). R92 provides a ligand contact to UDP-N-acetyl-alpha-D-glucosamine. C116 serves as the catalytic Proton donor. C116 bears the 2-(S-cysteinyl)pyruvic acid O-phosphothioketal mark. UDP-N-acetyl-alpha-D-glucosamine-binding positions include 121–125 (RPIDL), D306, and I328.

This sequence belongs to the EPSP synthase family. MurA subfamily.

The protein resides in the cytoplasm. The enzyme catalyses phosphoenolpyruvate + UDP-N-acetyl-alpha-D-glucosamine = UDP-N-acetyl-3-O-(1-carboxyvinyl)-alpha-D-glucosamine + phosphate. It functions in the pathway cell wall biogenesis; peptidoglycan biosynthesis. Cell wall formation. Adds enolpyruvyl to UDP-N-acetylglucosamine. The protein is UDP-N-acetylglucosamine 1-carboxyvinyltransferase 2 of Streptococcus pneumoniae (strain ATCC BAA-255 / R6).